We begin with the raw amino-acid sequence, 223 residues long: Ribonuclease 3 (223 aa).

In terms of domain architecture, RNase III spans 4 to 127 (LNRLEEHLGY…LMGAIYLESG (124 aa)). Glutamate 40 provides a ligand contact to Mg(2+). Aspartate 44 is an active-site residue. Aspartate 113 and glutamate 116 together coordinate Mg(2+). Glutamate 116 is a catalytic residue. The DRBM domain occupies 154–223 (DYKTTLQEIT…AWKVLQGMNI (70 aa)).

This sequence belongs to the ribonuclease III family. As to quaternary structure, homodimer. Requires Mg(2+) as cofactor.

It is found in the cytoplasm. It carries out the reaction Endonucleolytic cleavage to 5'-phosphomonoester.. Functionally, digests double-stranded RNA. Involved in the processing of primary rRNA transcript to yield the immediate precursors to the large and small rRNAs (23S and 16S). Processes some mRNAs, and tRNAs when they are encoded in the rRNA operon. Processes pre-crRNA and tracrRNA of type II CRISPR loci if present in the organism. The protein is Ribonuclease 3 of Campylobacter fetus subsp. fetus (strain 82-40).